We begin with the raw amino-acid sequence, 518 residues long: PTS system mannitol-specific EIICB component (518 aa).

Over 1 to 31 the chain is Cytoplasmic; the sequence is MDTMSNSQQNKGIGRKVQAFGSFLSSMIMPN. Residues 20 to 352 form the PTS EIIC type-2 domain; the sequence is FGSFLSSMIM…LKFTKDPKQD (333 aa). Residues 32–53 traverse the membrane as a helical segment; that stretch reads IGAFIAWGFIAAIFIDNGWFPN. Residues 54–57 are Extracellular-facing; it reads KDLA. A helical membrane pass occupies residues 58–78; sequence QLAGPMITYLIPLLIAFSGGR. Residues 79–142 are Cytoplasmic-facing; that stretch reads LIHDLRGGII…QGFEMLFNNF (64 aa). Residues 143–164 form a helical membrane-spanning segment; that stretch reads SAGILGFIMTIFGFEVLAPIMK. The Extracellular portion of the chain corresponds to 165–173; it reads FIMHILSVG. The chain crosses the membrane as a helical span at residues 174–194; sequence VEALVHAHLLPLVSILVEPAK. The Cytoplasmic portion of the chain corresponds to 195–281; sequence IVFLNNAINH…VLMRPLLFVS (87 aa). A helical membrane pass occupies residues 282 to 301; that stretch reads VILGGMTGVATYSLLDFGFK. Residues 302–321 are Extracellular-facing; sequence TPASPGSIIVYAINAPKGEF. Residues 322-343 form a helical membrane-spanning segment; the sequence is LHMLTGVVLAALVSFVVSALIL. At 344-518 the chain is on the cytoplasmic side; it reads KFTKDPKQDL…LINNLKEDQD (175 aa). The tract at residues 369 to 406 is disordered; it reads SVASKLSAKDDNKAADNKTAETTTATAASNKAEDKDSD. Residues 375–387 are compositionally biased toward basic and acidic residues; the sequence is SAKDDNKAADNKT. A compositionally biased stretch (low complexity) spans 388–398; that stretch reads AETTTATAASN. Residues 426–518 form the PTS EIIB type-2 domain; it reads DHVIFACDAG…LINNLKEDQD (93 aa). Cys-432 serves as the catalytic Phosphocysteine intermediate. The residue at position 432 (Cys-432) is a Phosphocysteine; by EIIA.

As to quaternary structure, homodimer.

Its subcellular location is the cell membrane. It carries out the reaction D-mannitol(out) + N(pros)-phospho-L-histidyl-[protein] = D-mannitol 1-phosphate(in) + L-histidyl-[protein]. In terms of biological role, the phosphoenolpyruvate-dependent sugar phosphotransferase system (sugar PTS), a major carbohydrate active transport system, catalyzes the phosphorylation of incoming sugar substrates concomitantly with their translocation across the cell membrane. The enzyme II CmtAB PTS system is involved in D-mannitol transport. This Staphylococcus carnosus protein is PTS system mannitol-specific EIICB component.